The primary structure comprises 24 residues: Acetylcholine receptor subunit alpha (24 aa).

This sequence belongs to the ligand-gated ion channel (TC 1.A.9) family. Acetylcholine receptor (TC 1.A.9.1) subfamily. Alpha-1/CHRNA1 sub-subfamily. One of the alpha chains that assemble within the acetylcholine receptor, a pentamer of two alpha chains, a beta, a delta, and a gamma or epsilon chains.

The protein resides in the postsynaptic cell membrane. The protein localises to the cell membrane. It carries out the reaction K(+)(in) = K(+)(out). The catalysed reaction is Na(+)(in) = Na(+)(out). Upon acetylcholine binding, the AChR responds by an extensive change in conformation that affects all subunits and leads to opening of an ion-conducting channel across the plasma membrane. In Electrophorus electricus (Electric eel), this protein is Acetylcholine receptor subunit alpha (chrna1).